The chain runs to 154 residues: Ribosome maturation factor RimP (154 aa).

It belongs to the RimP family.

The protein resides in the cytoplasm. In terms of biological role, required for maturation of 30S ribosomal subunits. This chain is Ribosome maturation factor RimP, found in Thioalkalivibrio sulfidiphilus (strain HL-EbGR7).